The primary structure comprises 107 residues: Sperm-specific class P protein 31 (107 aa).

The region spanning 1 to 107 is the MSP domain; that stretch reads MINIDPPSGD…GEVVVKMVAS (107 aa).

In terms of tissue distribution, expressed at higher level in testis.

The chain is Sperm-specific class P protein 31 (ssp-31) from Caenorhabditis elegans.